Reading from the N-terminus, the 473-residue chain is ATP synthase subunit beta (473 aa).

158–165 (GGAGVGKT) provides a ligand contact to ATP.

Belongs to the ATPase alpha/beta chains family. F-type ATPases have 2 components, CF(1) - the catalytic core - and CF(0) - the membrane proton channel. CF(1) has five subunits: alpha(3), beta(3), gamma(1), delta(1), epsilon(1). CF(0) has three main subunits: a(1), b(2) and c(9-12). The alpha and beta chains form an alternating ring which encloses part of the gamma chain. CF(1) is attached to CF(0) by a central stalk formed by the gamma and epsilon chains, while a peripheral stalk is formed by the delta and b chains.

It localises to the cell membrane. It carries out the reaction ATP + H2O + 4 H(+)(in) = ADP + phosphate + 5 H(+)(out). In terms of biological role, produces ATP from ADP in the presence of a proton gradient across the membrane. The catalytic sites are hosted primarily by the beta subunits. This chain is ATP synthase subunit beta, found in Bacillus licheniformis (strain ATCC 14580 / DSM 13 / JCM 2505 / CCUG 7422 / NBRC 12200 / NCIMB 9375 / NCTC 10341 / NRRL NRS-1264 / Gibson 46).